We begin with the raw amino-acid sequence, 154 residues long: Myoglobin (154 aa).

Positions 2–148 constitute a Globin domain; that stretch reads GLSDGEWQIV…FRNDIAAKYK (147 aa). Residue Ser4 is modified to Phosphoserine. Position 65 (His65) interacts with nitrite. His65 lines the O2 pocket. Thr68 is modified (phosphothreonine). His94 lines the heme b pocket.

This sequence belongs to the globin family. Monomeric.

Its subcellular location is the cytoplasm. It localises to the sarcoplasm. The enzyme catalyses Fe(III)-heme b-[protein] + nitric oxide + H2O = Fe(II)-heme b-[protein] + nitrite + 2 H(+). It catalyses the reaction H2O2 + AH2 = A + 2 H2O. Functionally, monomeric heme protein which primary function is to store oxygen and facilitate its diffusion within muscle tissues. Reversibly binds oxygen through a pentacoordinated heme iron and enables its timely and efficient release as needed during periods of heightened demand. Depending on the oxidative conditions of tissues and cells, and in addition to its ability to bind oxygen, it also has a nitrite reductase activity whereby it regulates the production of bioactive nitric oxide. Under stress conditions, like hypoxia and anoxia, it also protects cells against reactive oxygen species thanks to its pseudoperoxidase activity. The protein is Myoglobin (MB) of Lycaon pictus (African wild dog).